Here is a 314-residue protein sequence, read N- to C-terminus: Putative integrase/recombinase y4rB (314 aa).

The 78-residue stretch at 2-79 (STFRQAVQEY…YVRVFARYRA (78 aa)) folds into the Core-binding (CB) domain. Residues 100 to 304 (ARPYLYSKED…SPELMKEAMR (205 aa)) form the Tyr recombinase domain. Active-site residues include Arg-147, Lys-172, His-248, Arg-251, and His-282. Residue Tyr-291 is the O-(3'-phospho-DNA)-tyrosine intermediate of the active site.

It belongs to the 'phage' integrase family.

In Sinorhizobium fredii (strain NBRC 101917 / NGR234), this protein is Putative integrase/recombinase y4rB.